The following is a 132-amino-acid chain: Large ribosomal subunit protein uL14 (132 aa).

It belongs to the universal ribosomal protein uL14 family. Part of the 50S ribosomal subunit. Forms a cluster with proteins L3 and L24e, part of which may contact the 16S rRNA in 2 intersubunit bridges.

Binds to 23S rRNA. Forms part of two intersubunit bridges in the 70S ribosome. In Methanocaldococcus jannaschii (strain ATCC 43067 / DSM 2661 / JAL-1 / JCM 10045 / NBRC 100440) (Methanococcus jannaschii), this protein is Large ribosomal subunit protein uL14.